Here is a 340-residue protein sequence, read N- to C-terminus: Glycerol-3-phosphate dehydrogenase [NAD(P)+] (340 aa).

4 residues coordinate NADPH: Ser-11, Trp-12, Arg-33, and Lys-106. Sn-glycerol 3-phosphate contacts are provided by Lys-106, Gly-137, and Ser-139. Ala-141 contacts NADPH. Sn-glycerol 3-phosphate-binding residues include Lys-192, Asp-245, Ser-255, Arg-256, and Asn-257. Lys-192 acts as the Proton acceptor in catalysis. Arg-256 contacts NADPH. Residues Val-280 and Glu-282 each coordinate NADPH.

It belongs to the NAD-dependent glycerol-3-phosphate dehydrogenase family.

Its subcellular location is the cytoplasm. It carries out the reaction sn-glycerol 3-phosphate + NAD(+) = dihydroxyacetone phosphate + NADH + H(+). It catalyses the reaction sn-glycerol 3-phosphate + NADP(+) = dihydroxyacetone phosphate + NADPH + H(+). Its pathway is membrane lipid metabolism; glycerophospholipid metabolism. Its function is as follows. Catalyzes the reduction of the glycolytic intermediate dihydroxyacetone phosphate (DHAP) to sn-glycerol 3-phosphate (G3P), the key precursor for phospholipid synthesis. The polypeptide is Glycerol-3-phosphate dehydrogenase [NAD(P)+] (Bacillus cereus (strain B4264)).